The sequence spans 592 residues: MPLISIQNAFLAFSDLEILKNAVLYINKKERISLIGKNGAGKSTLLKVINKNQELDHGSIIYQKNIKISYLKQDNPKNLDISIYDFIKNQLKKENNKEININTIVEIKKIIKTFQIDKHSLLSELSGGSLRKVVLGSALLSQPDVLLLDEPTNHLDINTIAWLEKFLKKFSGTTLFISHDRSFIQNLCTRIIDLDRGKLTSFPGDYKEFIKLKKENNRIEKTKKKLFDQHLEKEEIWIRKGIKARTTRNEGRVRNLKVLRKEYKNYKKIENFNNVIINEIKNYSGKIIFKLKNISFFIEKKTIIQSFSSIIQYGDKIGLIGNNGSGKSTMIKILMGEKKIQKGSIHFGTKLNIAYFDQDRSTLDSNKSILENVNNGREKIVLNGKEQHLIGYLKKFLFKPNQMKCLVKNLSGGECNRLLLAKLFLKPSNVLILDEPTNDLDLDTLELLENIIIKYSGTVLIVSHDRNFIENTVNKYWIFKGDGLINTHFSSHNNIIKEKNKKIQKKYVLNPIKSNISFLKTKQNQVKKELKKVLNEIEKIENSIKTLKIQMNEPDFFKQHIKNQLPIVKQFNIEEKKLEKILIYWENLEKKL.

2 ABC transporter domains span residues 1–221 (MPLI…RIEK) and 289–516 (FKLK…KSNI). ATP-binding positions include 36 to 43 (GKNGAGKS) and 321 to 328 (GNNGSGKS). Residues 516-550 (ISFLKTKQNQVKKELKKVLNEIEKIENSIKTLKIQ) are a coiled coil. A C-terminal domain (CTD), binds DNA region spans residues 518-592 (FLKTKQNQVK…IYWENLEKKL (75 aa)).

This sequence belongs to the ABC transporter superfamily. ABCF family. Uup subfamily.

Its subcellular location is the cytoplasm. The catalysed reaction is ATP + H2O = ADP + phosphate + H(+). In terms of biological role, probably plays a role in ribosome assembly or function. May be involved in resolution of branched DNA intermediates that result from template switching in postreplication gaps. Binds DNA and has ATPase activity. This is ATP-binding protein Uup from Buchnera aphidicola subsp. Schizaphis graminum (strain Sg).